Here is a 142-residue protein sequence, read N- to C-terminus: Hemoglobin subunit alpha (142 aa).

The region spanning 2-142 (VLSSADKNNV…VSTVLTSKYR (141 aa)) is the Globin domain. Ser-4 bears the Phosphoserine mark. Lys-8 and Lys-12 each carry N6-succinyllysine. Residue Lys-17 is modified to N6-acetyllysine; alternate. Lys-17 is subject to N6-succinyllysine; alternate. Tyr-25 carries the phosphotyrosine modification. The residue at position 36 (Ser-36) is a Phosphoserine. Position 41 is an N6-succinyllysine (Lys-41). Ser-50 bears the Phosphoserine mark. Residue His-59 coordinates O2. His-88 contributes to the heme b binding site. Ser-103 carries the phosphoserine modification. Thr-109 is modified (phosphothreonine). A Phosphoserine modification is found at Ser-125. Thr-135 and Thr-138 each carry phosphothreonine. Ser-139 bears the Phosphoserine mark.

Belongs to the globin family. As to quaternary structure, heterotetramer of two alpha chains and two beta chains. As to expression, red blood cells.

Involved in oxygen transport from the lung to the various peripheral tissues. Functionally, hemopressin acts as an antagonist peptide of the cannabinoid receptor CNR1. Hemopressin-binding efficiently blocks cannabinoid receptor CNR1 and subsequent signaling. The chain is Hemoglobin subunit alpha (HBA) from Panthera leo (Lion).